Consider the following 355-residue polypeptide: Anthranilate phosphoribosyltransferase (355 aa).

5-phospho-alpha-D-ribose 1-diphosphate is bound by residues Gly91, 94 to 95 (GD), Thr99, 101 to 104 (NIST), 119 to 127 (KHGNRAMSS), and Ala131. Gly91 provides a ligand contact to anthranilate. Ser103 lines the Mg(2+) pocket. Asn122 is a binding site for anthranilate. An anthranilate-binding site is contributed by Arg177. Asp234 and Glu235 together coordinate Mg(2+).

This sequence belongs to the anthranilate phosphoribosyltransferase family. As to quaternary structure, homodimer. Requires Mg(2+) as cofactor.

It carries out the reaction N-(5-phospho-beta-D-ribosyl)anthranilate + diphosphate = 5-phospho-alpha-D-ribose 1-diphosphate + anthranilate. The protein operates within amino-acid biosynthesis; L-tryptophan biosynthesis; L-tryptophan from chorismate: step 2/5. Its function is as follows. Participates in the tryptophan-dependent indole-3-acetic acid production, which is a phytohormone released by A.brasilense. Catalyzes the transfer of the phosphoribosyl group of 5-phosphorylribose-1-pyrophosphate (PRPP) to anthranilate to yield N-(5'-phosphoribosyl)-anthranilate (PRA). In Azospirillum brasilense, this protein is Anthranilate phosphoribosyltransferase.